A 654-amino-acid polypeptide reads, in one-letter code: Spindle assembly abnormal protein 6 homolog (654 aa).

Residues 39-91 (VHRKDLVIRLTDDTDPFFLYNLVISEEDFQSLKLQQGLLVDFLAFPQKFIDLL) form the PISA domain. Residues 175–471 (TRQLHITQET…QLLKNNEKLI (297 aa)) adopt a coiled-coil conformation. Position 509 is a phosphoserine (serine 509). Residues 568-589 (ASIDGQPGAAVNRPCSNDKENG) form a disordered region. Serine 612 carries the post-translational modification Phosphoserine. Residues 634–644 (SKPTVLPSSSS) show a composition bias toward low complexity. Residues 634–654 (SKPTVLPSSSSAYFPGQLPSS) are disordered. Position 654 is a phosphoserine (serine 654).

In terms of assembly, nine homodimers form a cartwheel structure with an internal diameter of 23 nm and radial spokes connecting to the microtubule triplets. Forms a complex with CPAP and STIL. Interacts with FBXW5. Interacts with NUP62 and TUBG1 at the centrosome. Interacts with CENATAC; the interaction increases with CENATAC acetylation. Interacts with FZR1; the interaction is regulated by CENATAC and leads to SASS6 proteasomal degradation. Ubiquitinated by the SCF(FBXW5) E3 ubiquitin-protein ligase complex during S phase, leading to its degradation and preventing centriole reduplication. Ubiquitinated by the anaphase promoting complex/cyclosome (APC/C) E3 ubiquitin-protein ligase complex, leading to its degradation and preventing centriole reduplication.

It localises to the cytoplasm. It is found in the cytoskeleton. Its subcellular location is the microtubule organizing center. The protein resides in the centrosome. The protein localises to the centriole. Central scaffolding component of the centrioles ensuring their 9-fold symmetry. Required for centrosome biogenesis and duplication. Required both for mother-centriole-dependent centriole duplication and deuterosome-dependent centriole amplification in multiciliated cells. Not required for centriole formation in embryonic stem cells but necessary to maintain centriole architecture. Required for the recruitment of STIL to the procentriole and for STIL-mediated centriole amplification. The chain is Spindle assembly abnormal protein 6 homolog from Mus musculus (Mouse).